A 174-amino-acid polypeptide reads, in one-letter code: Ribosome maturation factor RimM (174 aa).

The PRC barrel domain occupies 98 to 172; it reads AGEYYYHQIV…VVTVELMEGL (75 aa).

It belongs to the RimM family. As to quaternary structure, binds ribosomal protein uS19.

The protein resides in the cytoplasm. In terms of biological role, an accessory protein needed during the final step in the assembly of 30S ribosomal subunit, possibly for assembly of the head region. Essential for efficient processing of 16S rRNA. May be needed both before and after RbfA during the maturation of 16S rRNA. It has affinity for free ribosomal 30S subunits but not for 70S ribosomes. This is Ribosome maturation factor RimM from Lactiplantibacillus plantarum (strain ATCC BAA-793 / NCIMB 8826 / WCFS1) (Lactobacillus plantarum).